The following is a 1319-amino-acid chain: Chitin-binding domain protein cbd-1 (1319 aa).

Residues 1-19 (MGPQLATVSLLLLTFFSNS) form the signal peptide. 3 Chitin-binding type-2 domains span residues 28-83 (ATEC…ECRV), 96-141 (EFDC…TQDC), and 190-236 (DFDC…QSCD). 3 disulfides stabilise this stretch: Cys61-Cys72, Cys128-Cys141, and Cys222-Cys235. Residues 250–271 (YSTSTITTPQEDDSEYSSTTSA) are disordered. Residues 304–357 (PFVCQEGQVNSFGMCSSRFNRCQNNSVRSKQCPVNTLFESSLVMCVFDLPQCQP) enclose the Chitin-binding type-2 4 domain. A glycan (N-linked (GlcNAc...) asparagine) is linked at Asn327. Cys335 and Cys348 are oxidised to a cystine. Residues 504-524 (KNRHSKKQLGPHEDPDGYDDE) form a disordered region. Positions 513–524 (GPHEDPDGYDDE) are enriched in basic and acidic residues. Residues 566-614 (NKDCQQYTTPTFLTFGDCFDQFIFCSGNGINRMAACPIGETFDKTLRSC) enclose the Chitin-binding type-2 5 domain. An intrachain disulfide couples Cys601 to Cys614. Residues 649–682 (VTTQSTWNDQPSTTQAPNSYESYTTQYSSNDVPS) are disordered. Chitin-binding type-2 domains are found at residues 689 to 745 (GDRC…ECGS), 782 to 838 (GDRC…KCQT), and 883 to 942 (VDTC…ACDE). Cys721 and Cys734 are oxidised to a cystine. The disordered stretch occupies residues 742-764 (ECGSQGSTSSPVITTPGQDQSSN). Positions 745–764 (SQGSTSSPVITTPGQDQSSN) are enriched in polar residues. 2 cysteine pairs are disulfide-bonded: Cys814/Cys827 and Cys916/Cys929. Over residues 984-995 (TGSTKYSTTDSG) the composition is skewed to polar residues. Residues 984-1031 (TGSTKYSTTDSGEYTIPYGDETTSTRSYDRADNDSEDEEEDDVEHDQK) are disordered. An N-linked (GlcNAc...) asparagine glycan is attached at Asn1016. Residues 1017–1027 (DSEDEEEDDVE) show a composition bias toward acidic residues. Chitin-binding type-2 domains lie at 1029–1081 (DQKC…GCGK), 1105–1163 (EGRC…ACTV), 1179–1237 (SAFC…GCEN), and 1242–1298 (NGEC…SCSG). Intrachain disulfides connect Cys1060–Cys1073, Cys1139–Cys1152, Cys1213–Cys1226, and Cys1274–Cys1287. Positions 1297-1312 (SGQASDSNSSYGSSTY) are enriched in low complexity. Residues 1297-1319 (SGQASDSNSSYGSSTYNDDKSGY) form a disordered region. N-linked (GlcNAc...) asparagine glycosylation occurs at Asn1304.

It localises to the secreted. The protein resides in the extracellular space. The protein localises to the extracellular matrix. Its function is as follows. In unfertilized oocytes, maintains egg-1 and egg-2 at the plasma membrane together with chitin synthase chs-1 and kinase mbk-2. Essential for the formation of a continuous and cohesive chitin layer following fertilization. This chain is Chitin-binding domain protein cbd-1, found in Caenorhabditis elegans.